A 165-amino-acid chain; its full sequence is uncharacterized protein (165 aa).

It belongs to the IIV-6 196R family.

This is an uncharacterized protein from Invertebrate iridescent virus 3 (IIV-3).